Reading from the N-terminus, the 276-residue chain is Large ribosomal subunit protein uL2 (276 aa).

The tract at residues 208–276 (KAGRNRHRGI…KLIISRRKGK (69 aa)) is disordered. Residues 230–240 (DHPHGGGEGKK) are compositionally biased toward basic and acidic residues. Over residues 255–276 (KGAKTRRKKASDKLIISRRKGK) the composition is skewed to basic residues.

The protein belongs to the universal ribosomal protein uL2 family. Part of the 50S ribosomal subunit. Forms a bridge to the 30S subunit in the 70S ribosome.

One of the primary rRNA binding proteins. Required for association of the 30S and 50S subunits to form the 70S ribosome, for tRNA binding and peptide bond formation. It has been suggested to have peptidyltransferase activity; this is somewhat controversial. Makes several contacts with the 16S rRNA in the 70S ribosome. This is Large ribosomal subunit protein uL2 from Campylobacter lari (strain RM2100 / D67 / ATCC BAA-1060).